The primary structure comprises 186 residues: Crossover junction endodeoxyribonuclease RuvC (186 aa).

Catalysis depends on residues D14, E73, and D145. Mg(2+) contacts are provided by D14, E73, and D145. A disordered region spans residues 162 to 186; that stretch reads GRSLPPSRGRRRSGSRQRWRDYRPS. The span at 169 to 178 shows a compositional bias: basic residues; it reads RGRRRSGSRQ.

It belongs to the RuvC family. In terms of assembly, homodimer which binds Holliday junction (HJ) DNA. The HJ becomes 2-fold symmetrical on binding to RuvC with unstacked arms; it has a different conformation from HJ DNA in complex with RuvA. In the full resolvosome a probable DNA-RuvA(4)-RuvB(12)-RuvC(2) complex forms which resolves the HJ. Mg(2+) serves as cofactor.

It is found in the cytoplasm. It catalyses the reaction Endonucleolytic cleavage at a junction such as a reciprocal single-stranded crossover between two homologous DNA duplexes (Holliday junction).. Functionally, the RuvA-RuvB-RuvC complex processes Holliday junction (HJ) DNA during genetic recombination and DNA repair. Endonuclease that resolves HJ intermediates. Cleaves cruciform DNA by making single-stranded nicks across the HJ at symmetrical positions within the homologous arms, yielding a 5'-phosphate and a 3'-hydroxyl group; requires a central core of homology in the junction. The consensus cleavage sequence is 5'-(A/T)TT(C/G)-3'. Cleavage occurs on the 3'-side of the TT dinucleotide at the point of strand exchange. HJ branch migration catalyzed by RuvA-RuvB allows RuvC to scan DNA until it finds its consensus sequence, where it cleaves and resolves the cruciform DNA. In Chromohalobacter salexigens (strain ATCC BAA-138 / DSM 3043 / CIP 106854 / NCIMB 13768 / 1H11), this protein is Crossover junction endodeoxyribonuclease RuvC.